The primary structure comprises 181 residues: Probable mitochondrial import inner membrane translocase subunit tim-17B.1 (181 aa).

The next 3 helical transmembrane spans lie at 17 to 37 (IGSA…FGGY), 61 to 81 (GVQF…LVAI), and 109 to 129 (VMAG…GVGL). A disordered region spans residues 137 to 181 (AMMDPTQPPPEALDDPRSLGQKSQAEPGLDQTRPFGIPTGLPNLS).

This sequence belongs to the Tim17/Tim22/Tim23 family.

It is found in the mitochondrion inner membrane. Essential component of the TIM23 complex, a complex that mediates the translocation of transit peptide-containing proteins across the mitochondrial inner membrane. In Caenorhabditis elegans, this protein is Probable mitochondrial import inner membrane translocase subunit tim-17B.1.